The sequence spans 90 residues: Protein LURE 1.4 (90 aa).

Positions 1 to 19 (MKCPSIFLTLLIFVSSCTS) are cleaved as a signal peptide. Residue Asn-23 is glycosylated (N-linked (GlcNAc...) asparagine). Cystine bridges form between Cys-58-Cys-75, Cys-61-Cys-82, and Cys-65-Cys-84. The segment at 67 to 87 (RRGKYIRTCSFERKLCRCSIS) is PRK6 binding.

The protein belongs to the DEFL family. As to quaternary structure, binds to PRK6 LRRs. As to expression, expressed in the pistil. Detected exclusively in the synergid cells.

It is found in the secreted. Its function is as follows. Pollen tube attractants guiding pollen tubes to the ovular micropyle. The chain is Protein LURE 1.4 from Arabidopsis thaliana (Mouse-ear cress).